A 352-amino-acid polypeptide reads, in one-letter code: Zinc finger CCCH domain-containing protein 42 (352 aa).

The RRM domain occupies 36-114 (AYVYVGGIPF…RTIKVDHCGA (79 aa)). 2 C3H1-type zinc fingers span residues 130–157 (REAR…HDEK) and 180–207 (REGR…HDEK). Positions 156-179 (EKRAANTGWGHEEDRSSKWDHDKN) are disordered. Basic and acidic residues-rich tracts occupy residues 210-230 (ATTG…DKLN), 243-296 (GDFK…RSGR), and 304-352 (RHND…DRRR). The interval 210 to 352 (ATTGWGHEED…DSLRREDRRR (143 aa)) is disordered. A coiled-coil region spans residues 319-348 (RAQDWEKRKAESRRDRNDREEKDRDSLRRE).

The chain is Zinc finger CCCH domain-containing protein 42 from Arabidopsis thaliana (Mouse-ear cress).